A 121-amino-acid chain; its full sequence is Large ribosomal subunit protein eL34A (121 aa).

The protein belongs to the eukaryotic ribosomal protein eL34 family. As to quaternary structure, component of the large ribosomal subunit (LSU). Mature yeast ribosomes consist of a small (40S) and a large (60S) subunit. The 40S small subunit contains 1 molecule of ribosomal RNA (18S rRNA) and 33 different proteins (encoded by 57 genes). The large 60S subunit contains 3 rRNA molecules (25S, 5.8S and 5S rRNA) and 46 different proteins (encoded by 81 genes).

The protein localises to the cytoplasm. Functionally, component of the ribosome, a large ribonucleoprotein complex responsible for the synthesis of proteins in the cell. The small ribosomal subunit (SSU) binds messenger RNAs (mRNAs) and translates the encoded message by selecting cognate aminoacyl-transfer RNA (tRNA) molecules. The large subunit (LSU) contains the ribosomal catalytic site termed the peptidyl transferase center (PTC), which catalyzes the formation of peptide bonds, thereby polymerizing the amino acids delivered by tRNAs into a polypeptide chain. The nascent polypeptides leave the ribosome through a tunnel in the LSU and interact with protein factors that function in enzymatic processing, targeting, and the membrane insertion of nascent chains at the exit of the ribosomal tunnel. In Saccharomyces cerevisiae (strain ATCC 204508 / S288c) (Baker's yeast), this protein is Large ribosomal subunit protein eL34A.